A 461-amino-acid polypeptide reads, in one-letter code: Mannose-6-phosphate isomerase (461 aa).

Zn(2+) is bound by residues Q107, H109, E134, and H291. R310 is a catalytic residue.

It belongs to the mannose-6-phosphate isomerase type 1 family. Zn(2+) serves as cofactor.

It is found in the cytoplasm. The enzyme catalyses D-mannose 6-phosphate = D-fructose 6-phosphate. It participates in nucleotide-sugar biosynthesis; GDP-alpha-D-mannose biosynthesis; alpha-D-mannose 1-phosphate from D-fructose 6-phosphate: step 1/2. Functionally, involved in the synthesis of the GDP-mannose and dolichol-phosphate-mannose required for a number of critical mannosyl transfer reactions. The polypeptide is Mannose-6-phosphate isomerase (manA) (Emericella nidulans (strain FGSC A4 / ATCC 38163 / CBS 112.46 / NRRL 194 / M139) (Aspergillus nidulans)).